Consider the following 266-residue polypeptide: Esterase AGAP003155 (266 aa).

Catalysis depends on charge relay system residues serine 114, aspartate 172, and histidine 199. Residues 231–266 are disordered; that stretch reads ATEENSFHLEGQEEAEESALQPVHEGLQNGSDSDSD.

It belongs to the LovG family.

This Anopheles gambiae (African malaria mosquito) protein is Esterase AGAP003155.